Reading from the N-terminus, the 376-residue chain is UDP-N-acetylglucosamine 2-epimerase (376 aa).

Substrate-binding positions include Arg-10, Lys-15, Asp-95, Glu-117, His-213, Gln-271, Phe-276, 290 to 292 (SGG), Glu-296, and Arg-313.

This sequence belongs to the UDP-N-acetylglucosamine 2-epimerase family. As to quaternary structure, homodimer.

Its subcellular location is the cytoplasm. The enzyme catalyses UDP-N-acetyl-alpha-D-glucosamine = UDP-N-acetyl-alpha-D-mannosamine. The protein operates within bacterial outer membrane biogenesis; enterobacterial common antigen biosynthesis. Functionally, catalyzes the reversible epimerization at C-2 of UDP-N-acetylglucosamine (UDP-GlcNAc) and thereby provides bacteria with UDP-N-acetylmannosamine (UDP-ManNAc), the activated donor of ManNAc residues. This Salmonella typhimurium (strain LT2 / SGSC1412 / ATCC 700720) protein is UDP-N-acetylglucosamine 2-epimerase.